The sequence spans 239 residues: Ribonuclease PH (239 aa).

Phosphate-binding positions include arginine 86 and 124 to 126; that span reads GTR.

This sequence belongs to the RNase PH family. In terms of assembly, homohexameric ring arranged as a trimer of dimers.

It catalyses the reaction tRNA(n+1) + phosphate = tRNA(n) + a ribonucleoside 5'-diphosphate. In terms of biological role, phosphorolytic 3'-5' exoribonuclease that plays an important role in tRNA 3'-end maturation. Removes nucleotide residues following the 3'-CCA terminus of tRNAs; can also add nucleotides to the ends of RNA molecules by using nucleoside diphosphates as substrates, but this may not be physiologically important. Probably plays a role in initiation of 16S rRNA degradation (leading to ribosome degradation) during starvation. The polypeptide is Ribonuclease PH (Cupriavidus taiwanensis (strain DSM 17343 / BCRC 17206 / CCUG 44338 / CIP 107171 / LMG 19424 / R1) (Ralstonia taiwanensis (strain LMG 19424))).